The chain runs to 382 residues: Na(+)/H(+) antiporter NhaA 2 (382 aa).

Helical transmembrane passes span 7-27 (MVLSETFPGILLIFFTFLALL), 58-78 (LDLWINDGLIAIFFLCIGLEL), 94-114 (SLPIFGALGGMITPALIFIAI), 124-144 (GWAIPTATDIAFAVGILMLLG), 153-173 (LFLLSLAIFDDLGAIVIIALF), 178-198 (LSALAIIICLFCIFALLLLNY), 199-219 (YHITHLSLYVLVGVVLWIAML), 255-275 (NPWVVYFILPLFAFANAGIDI), 291-311 (IILGLFLGKQLGVFTFCFIAI), 327-347 (FYGICILTGIGFTMSLFIDGL), and 361-381 (LAILVASFLSAIVGFIYLKIV).

It belongs to the NhaA Na(+)/H(+) (TC 2.A.33) antiporter family.

The protein localises to the cell inner membrane. The enzyme catalyses Na(+)(in) + 2 H(+)(out) = Na(+)(out) + 2 H(+)(in). Functionally, na(+)/H(+) antiporter that extrudes sodium in exchange for external protons. The chain is Na(+)/H(+) antiporter NhaA 2 from Campylobacter jejuni (strain RM1221).